We begin with the raw amino-acid sequence, 502 residues long: ATP synthase subunit alpha (502 aa).

Residues 115-135 (VDGLGPINTTNTRPIESPAPG) form a disordered region. Residue 169-176 (GDRQTGKT) participates in ATP binding.

The protein belongs to the ATPase alpha/beta chains family. F-type ATPases have 2 components, CF(1) - the catalytic core - and CF(0) - the membrane proton channel. CF(1) has five subunits: alpha(3), beta(3), gamma(1), delta(1), epsilon(1). CF(0) has three main subunits: a(1), b(2) and c(9-12). The alpha and beta chains form an alternating ring which encloses part of the gamma chain. CF(1) is attached to CF(0) by a central stalk formed by the gamma and epsilon chains, while a peripheral stalk is formed by the delta and b chains.

Its subcellular location is the cell membrane. It carries out the reaction ATP + H2O + 4 H(+)(in) = ADP + phosphate + 5 H(+)(out). Its function is as follows. Produces ATP from ADP in the presence of a proton gradient across the membrane. The alpha chain is a regulatory subunit. The chain is ATP synthase subunit alpha from Bacillus anthracis (strain A0248).